Consider the following 349-residue polypeptide: Isopentenyl-diphosphate delta-isomerase (349 aa).

9–10 (RK) lines the substrate pocket. Residues 65-67 (AMT), serine 95, and asparagine 124 contribute to the FMN site. 95–97 (STH) is a substrate binding site. Glutamine 154 is a binding site for substrate. Position 155 (glutamate 155) interacts with Mg(2+). FMN-binding positions include lysine 186, serine 211, threonine 216, 262–264 (GLR), and 283–284 (SR).

The protein belongs to the IPP isomerase type 2 family. As to quaternary structure, homooctamer. Dimer of tetramers. FMN is required as a cofactor. The cofactor is NADPH. Requires Mg(2+) as cofactor.

It is found in the cytoplasm. It carries out the reaction isopentenyl diphosphate = dimethylallyl diphosphate. Functionally, involved in the biosynthesis of isoprenoids. Catalyzes the 1,3-allylic rearrangement of the homoallylic substrate isopentenyl (IPP) to its allylic isomer, dimethylallyl diphosphate (DMAPP). The sequence is that of Isopentenyl-diphosphate delta-isomerase from Staphylococcus aureus (strain USA300 / TCH1516).